A 126-amino-acid polypeptide reads, in one-letter code: Holo-[acyl-carrier-protein] synthase (126 aa).

Residues D9 and E58 each coordinate Mg(2+).

It belongs to the P-Pant transferase superfamily. AcpS family. Mg(2+) serves as cofactor.

Its subcellular location is the cytoplasm. It catalyses the reaction apo-[ACP] + CoA = holo-[ACP] + adenosine 3',5'-bisphosphate + H(+). Functionally, transfers the 4'-phosphopantetheine moiety from coenzyme A to a Ser of acyl-carrier-protein. This chain is Holo-[acyl-carrier-protein] synthase, found in Salmonella choleraesuis (strain SC-B67).